The sequence spans 108 residues: Protein YcgL (108 aa).

The YcgL domain occupies 12 to 96 (MFCVIYRSSK…PPEDLLKQHL (85 aa)).

In Escherichia coli O9:H4 (strain HS), this protein is Protein YcgL.